The primary structure comprises 487 residues: ATP-dependent RNA helicase DBP3 (487 aa).

Residues Met1 to Asp40 form a disordered region. A Q motif motif is present at residues Thr71–Ser98. The region spanning Trp101 to Val276 is the Helicase ATP-binding domain. Ala114–Thr121 is a binding site for ATP. The DEAD box signature appears at Asp222 to Asp225. Residues Arg291–Gly456 enclose the Helicase C-terminal domain.

The protein belongs to the DEAD box helicase family. DDX5/DBP2 subfamily.

It localises to the nucleus. The protein resides in the nucleolus. It carries out the reaction ATP + H2O = ADP + phosphate + H(+). ATP-dependent RNA helicase required for 60S ribosomal subunit synthesis. Involved in efficient pre-rRNA processing, predominantly at site A3, which is necessary for the normal formation of 25S and 5.8S rRNAs. The protein is ATP-dependent RNA helicase DBP3 (DBP3) of Ajellomyces capsulatus (strain NAm1 / WU24) (Darling's disease fungus).